The following is a 267-amino-acid chain: uncharacterized protein (267 aa).

Residues 2-198 (LGANGAGKTT…FRNKFIVIEG (197 aa)) form the ABC transporter domain. 3–10 (GANGAGKT) contributes to the ATP binding site.

This sequence belongs to the ABC transporter superfamily.

This is an uncharacterized protein from Alkalihalophilus pseudofirmus (strain ATCC BAA-2126 / JCM 17055 / OF4) (Bacillus pseudofirmus).